The primary structure comprises 142 residues: Large ribosomal subunit protein uL13c (142 aa).

Belongs to the universal ribosomal protein uL13 family. Part of the 50S ribosomal subunit.

It is found in the plastid. It localises to the chloroplast. This is Large ribosomal subunit protein uL13c from Pyropia yezoensis (Susabi-nori).